A 158-amino-acid polypeptide reads, in one-letter code: NAD(P)H-quinone oxidoreductase subunit J, chloroplastic (158 aa).

Belongs to the complex I 30 kDa subunit family. As to quaternary structure, NDH is composed of at least 16 different subunits, 5 of which are encoded in the nucleus.

Its subcellular location is the plastid. The protein resides in the chloroplast thylakoid membrane. It catalyses the reaction a plastoquinone + NADH + (n+1) H(+)(in) = a plastoquinol + NAD(+) + n H(+)(out). The enzyme catalyses a plastoquinone + NADPH + (n+1) H(+)(in) = a plastoquinol + NADP(+) + n H(+)(out). Functionally, NDH shuttles electrons from NAD(P)H:plastoquinone, via FMN and iron-sulfur (Fe-S) centers, to quinones in the photosynthetic chain and possibly in a chloroplast respiratory chain. The immediate electron acceptor for the enzyme in this species is believed to be plastoquinone. Couples the redox reaction to proton translocation, and thus conserves the redox energy in a proton gradient. The sequence is that of NAD(P)H-quinone oxidoreductase subunit J, chloroplastic from Trachelium caeruleum (Blue throatwort).